We begin with the raw amino-acid sequence, 471 residues long: uncharacterized protein (471 aa).

The next 11 helical transmembrane spans lie at 15–35 (LWGP…TILL), 66–86 (PLQA…IVGV), 89–109 (AIMF…LFAM), 147–167 (WLGV…IMVQ), 179–199 (FSFN…LVVI), 210–230 (EFVV…IVLM), 237–257 (AFFS…GGFA), 303–323 (VIGI…IVLA), 353–373 (GYFV…VVIF), 386–406 (LAGH…AAGG), and 410–430 (IWGV…IALL).

Belongs to the alanine or glycine:cation symporter (AGCS) (TC 2.A.25) family.

It localises to the cell membrane. This is an uncharacterized protein from Bacillus subtilis (strain 168).